The primary structure comprises 310 residues: NADH-cytochrome b5 reductase 1 (310 aa).

A helical membrane pass occupies residues 32-52; that stretch reads EWLPYAVALAAILSGGKVFSN. The 106-residue stretch at 61 to 166 folds into the FAD-binding FR-type domain; the sequence is TEFQNFELKE…RGPKGAMVYT (106 aa). FAD-binding positions include 146–161 and 172–209; these read AGLRIGQTMKVRGPKG and KIGMIAGGTGITPMLQIIKAIIRGRPRNGGNDTTQVDL.

It belongs to the flavoprotein pyridine nucleotide cytochrome reductase family. Monomer. Component of the 2-(3-amino-3-carboxypropyl)histidine synthase complex composed of DPH1, DPH2, DPH3 and a NADH-dependent reductase, predominantly CBR1. Requires FAD as cofactor.

The protein localises to the mitochondrion outer membrane. It carries out the reaction 2 Fe(III)-[cytochrome b5] + NADH = 2 Fe(II)-[cytochrome b5] + NAD(+) + H(+). The catalysed reaction is 2 Fe(3+)-[Dph3] + NADH = 2 Fe(2+)-[Dph3] + NAD(+) + H(+). The protein operates within protein modification; peptidyl-diphthamide biosynthesis. Functionally, NADH-dependent reductase for DPH3 and cytochrome b5. Required for the first step of diphthamide biosynthesis, a post-translational modification of histidine which occurs in elongation factor 2. DPH1 and DPH2 transfer a 3-amino-3-carboxypropyl (ACP) group from S-adenosyl-L-methionine (SAM) to a histidine residue, the reaction is assisted by a reduction system comprising DPH3 and a NADH-dependent reductase, predominantly CBR1. By reducing DPH3, also involved in the formation of the tRNA wobble base modification mcm5s 2U (5-methoxycarbonylmethyl-2-thiouridine), mediated by the elongator complex. The cytochrome b5/NADH cytochrome b5 reductase electron transfer system supports the catalytic activity of several sterol biosynthetic enzymes. This Ajellomyces capsulatus (strain NAm1 / WU24) (Darling's disease fungus) protein is NADH-cytochrome b5 reductase 1 (CBR1).